The primary structure comprises 184 residues: GTPase RhebL1 (184 aa).

Residues 16–21 (SVGKTS), 32–38 (LEGYDPT), Gly63, 119–122 (NKAD), and 149–150 (SA) each bind GTP. Residues 35-43 (YDPTVENTY) carry the Effector region motif. Thr38 is a Mg(2+) binding site. Cysteine methyl ester is present on Cys181. A lipid anchor (S-farnesyl cysteine) is attached at Cys181. The propeptide at 182 to 184 (YLM) is removed in mature form.

The protein belongs to the small GTPase superfamily. Rheb family. As to quaternary structure, interacts with MTOR.

It localises to the endomembrane system. The protein localises to the cytoplasm. It catalyses the reaction GTP + H2O = GDP + phosphate + H(+). Functionally, binds GTP and exhibits intrinsic GTPase activity. May activate NF-kappa-B-mediated gene transcription. Promotes signal transduction through MTOR, activates RPS6KB1, and is a downstream target of the small GTPase-activating proteins TSC1 and TSC2. This is GTPase RhebL1 (Rhebl1) from Mus musculus (Mouse).